The sequence spans 71 residues: ATP synthase subunit c (71 aa).

The next 2 helical transmembrane spans lie at 4–24 and 48–68; these read AVIG…GIGI and IIGA…AFMI.

It belongs to the ATPase C chain family. As to quaternary structure, F-type ATPases have 2 components, F(1) - the catalytic core - and F(0) - the membrane proton channel. F(1) has five subunits: alpha(3), beta(3), gamma(1), delta(1), epsilon(1). F(0) has three main subunits: a(1), b(2) and c(10-14). The alpha and beta chains form an alternating ring which encloses part of the gamma chain. F(1) is attached to F(0) by a central stalk formed by the gamma and epsilon chains, while a peripheral stalk is formed by the delta and b chains.

Its subcellular location is the cell membrane. In terms of biological role, f(1)F(0) ATP synthase produces ATP from ADP in the presence of a proton or sodium gradient. F-type ATPases consist of two structural domains, F(1) containing the extramembraneous catalytic core and F(0) containing the membrane proton channel, linked together by a central stalk and a peripheral stalk. During catalysis, ATP synthesis in the catalytic domain of F(1) is coupled via a rotary mechanism of the central stalk subunits to proton translocation. Key component of the F(0) channel; it plays a direct role in translocation across the membrane. A homomeric c-ring of between 10-14 subunits forms the central stalk rotor element with the F(1) delta and epsilon subunits. In Clostridium botulinum (strain Alaska E43 / Type E3), this protein is ATP synthase subunit c.